The primary structure comprises 1722 residues: MGNQDGKLKRSAGDALHEGGGGAEDALGPRDVEATKKGSGGKKALGKHGKGGGGGGGGGESGKKKSKSDSRASVFSNLRIRKNLSKGKGAGGSREDVLDSQALQTGELDSAHSLLTKTPDLSLSADEAGLSDTECADPFEVTGPGGPGPAEARVGGRPIAEDVETAAGAQDGQRTSSGSDTDIYSFHSATEQEDLLSDIQQAIRLQQQQQQQLQLQLQQQQQQQQLQGAEEPAAPPTAVSPQPGAFLGLDRFLLGPSGGAGEAPGSPDTEQALSALSDLPESLAAEPREPQQPPSPGGLPVSEAPSLPAAQPAAKDSPSSTAFPFPEAGPGEEAAGAPVRGAGDTDEEGEEDAFEDAPRGSPGEEWAPEVGEDAPQRLGEEPEEEAQGPDAPAAASLPGSPAPSQRCFKPYPLITPCYIKTTTRQLSSPNHSPSQSPNQSPRIKRRPEPSLSRGSRTALASVAAPAKKHRADGGLAAGLSRSADWTEELGARTPRVGGSAHLLERGVASDSGGGVSPALAAKASGAPAAADGFQNVFTGRTLLEKLFSQQENGPPEEAEKFCSRIIAMGLLLPFSDCFREPCNQNAQTNAASFDQDQLYTWAAVSQPTHSLDYSEGQFPRRVPSMGPPSKPPDEEHRLEDAETESQSAVSETPQKRSDAVQKEVVDMKSEGQATVIQQLEQTIEDLRTKIAELERQYPALDTEVASGHQGLENGVTASGDVCLEALRLEEKEVRHHRILEAKSIQTSPTEEGGVLTLPPVDGLPGRPPCPPGAESGPQTKFCSEISLIVSPRRISVQLDSHQPTQSISQPPPPPSLLWSAGQGQPGSQPPHSISTEFQTSHEHSVSSAFKNSCNIPSPPPLPCTESSSSMPGLGMVPPPPPPLPGMTVPTLPSTAIPQPPPLQGTEMLPPPPPPLPGAGIPPPPPLPGAGILPLPPLPGAGIPPPPPLPGAAIPPPPPLPGAGIPLPPPLPGAGIPPPPPLPGAGIPPPPPLPGAGIPPPPPLPGAGIPPPPPLPGAGIPPPPPLPGAGIPPPPPLPGAGIPPPPPLPGAGIPPPPPLPGAGIPPPPPLPGAGIPPPPPLPGAGIPPPPPLPGAGIPPPPPLPGVGIPPPPPLPGAGIPPPPPLPGAGIPPPPPLPGAGIPPPPPLPRVGIPPPPPLPGAGIPPPPPLPGAGIPPPPPLPGVGIPPPPPLPGVGIPPPPPLPGAGIPPPPPLPGMGIPPAPAPPLPPPGTGIPPPPLLPVSGPPLLPQVGSSTLPTPQVCGFLPPPLPSGLFGLGMNQDKGSRKQPIEPCRPMKPLYWTRIQLHSKRDSSTSLIWEKIEEPSIDCHEFEELFSKTAVKERKKPISDTISKTKAKQVVKLLSNKRSQAVGILMSSLHLDMKDIQHAVVNLDNSVVDLETLQALYENRAQSDELEKIEKHGRSSKDKENAKSLDKPEQFLYELSLIPNFSERVFCILFQSTFSESICSIRRKLELLQKLCETLKNGPGVMQVLGLVLAFGNYMNGGNKTRGQADGFGLDILPKLKDVKSSDNSRSLLSYIVSYYLRNFDEDAGKEQCLFPLPEPQDLFQASQMKFEDFQKDLRKLKKDLKACEVEAGKVYQVSSKEHMQPFKENMEQFIIQAKIDQEAEENSLTETHKCFLETTAYFFMKPKLGEKEVSPNAFFSIWHEFSSDFKDFWKKENKLLLQERVKEAEEVCRQKKGKSLYKIKPRHDSGIKAKISMKT.

2 stretches are compositionally biased toward basic and acidic residues: residues 1-17 (MGNQ…DALH) and 27-36 (LGPRDVEATK). Disordered regions lie at residues 1–104 (MGNQ…QALQ), 126–189 (DEAG…FHSA), and 207–475 (QQQQ…DGGL). Gly residues predominate over residues 51–60 (GGGGGGGGGE). Basic and acidic residues predominate over residues 61–70 (SGKKKSKSDS). Ser-93 bears the Phosphoserine mark. Residues 172-182 (GQRTSSGSDTD) are compositionally biased toward polar residues. Residues 193–231 (EDLLSDIQQAIRLQQQQQQQLQLQLQQQQQQQQLQGAEE) are a coiled coil. 2 stretches are compositionally biased toward low complexity: residues 207-227 (QQQQ…QQLQ) and 322-342 (AFPF…VRGA). Residues 344–355 (DTDEEGEEDAFE) are compositionally biased toward acidic residues. 2 stretches are compositionally biased toward low complexity: residues 389–404 (PDAP…PAPS) and 427–441 (SSPN…NQSP). Residues Ser-482 and Ser-516 each carry the phosphoserine modification. Positions 612-663 (DYSEGQFPRRVPSMGPPSKPPDEEHRLEDAETESQSAVSETPQKRSDAVQKE) are disordered. Basic and acidic residues-rich tracts occupy residues 631-640 (PPDEEHRLED) and 653-663 (PQKRSDAVQKE). Positions 670–706 (EGQATVIQQLEQTIEDLRTKIAELERQYPALDTEVAS) form a coiled coil. The region spanning 758-1268 (PPVDGLPGRP…VCGFLPPPLP (511 aa)) is the FH1 domain. The interval 797 to 1252 (QLDSHQPTQS…PPLLPQVGSS (456 aa)) is disordered. Polar residues-rich tracts occupy residues 821 to 838 (GQGQ…TEFQ) and 845 to 855 (VSSAFKNSCNI). Pro residues predominate over residues 897–1246 (PQPPPLQGTE…LLPVSGPPLL (350 aa)). One can recognise an FH2 domain in the interval 1283-1698 (RKQPIEPCRP…KEAEEVCRQK (416 aa)). Coiled coils occupy residues 1567–1597 (QASQ…AGKV) and 1677–1699 (KKEN…RQKK). Residues 1715-1722 (KAKISMKT) are important for interaction with SPIRE1.

It belongs to the formin homology family. Cappuccino subfamily. As to quaternary structure, interacts with SPIRE1. Binds actin. Interacts with CDKN1A. As to expression, expressed almost exclusively in the developing and mature central nervous system.

It localises to the cytoplasm. It is found in the cytoskeleton. The protein resides in the cytosol. The protein localises to the perinuclear region. Its subcellular location is the nucleus. It localises to the nucleolus. It is found in the cell membrane. The protein resides in the cytoplasmic vesicle membrane. The protein localises to the cell cortex. Functionally, actin-binding protein that is involved in actin cytoskeleton assembly and reorganization. Acts as an actin nucleation factor and promotes assembly of actin filaments together with SPIRE1 and SPIRE2. Involved in intracellular vesicle transport along actin fibers, providing a novel link between actin cytoskeleton dynamics and intracellular transport. Required for asymmetric spindle positioning, asymmetric oocyte division and polar body extrusion during female germ cell meiosis. Plays a role in responses to DNA damage, cellular stress and hypoxia by protecting CDKN1A against degradation, and thereby plays a role in stress-induced cell cycle arrest. Also acts in the nucleus: together with SPIRE1 and SPIRE2, promotes assembly of nuclear actin filaments in response to DNA damage in order to facilitate movement of chromatin and repair factors after DNA damage. Protects cells against apoptosis by protecting CDKN1A against degradation. This is Formin-2 (FMN2) from Homo sapiens (Human).